The following is a 516-amino-acid chain: Citrate synthase, glyoxysomal (516 aa).

A glyoxysome-targeting transit peptide spans M1–V43. Active-site residues include H329, H368, and D424.

Belongs to the citrate synthase family.

The protein localises to the glyoxysome. The enzyme catalyses oxaloacetate + acetyl-CoA + H2O = citrate + CoA + H(+). Its pathway is carbohydrate metabolism; glyoxylate cycle; isocitrate from oxaloacetate: step 1/2. This chain is Citrate synthase, glyoxysomal, found in Cucurbita maxima (Pumpkin).